A 925-amino-acid chain; its full sequence is Serine/threonine-protein kinase SIK2 (925 aa).

A Protein kinase domain is found at Y20–M271. Residue T25 is modified to Phosphothreonine. ATP-binding positions include L26–V34 and K49. K53 is subject to N6-acetyllysine; by EP300. The active-site Proton acceptor is the D142. T175 is modified (phosphothreonine). Positions E295–E335 constitute a UBA domain. The residue at position 534 (S534) is a Phosphoserine. The segment at A564–A586 is disordered. Residue S587 is modified to Phosphoserine. Disordered regions lie at residues P630–S674, S742–P776, and Q800–D895. Composition is skewed to low complexity over residues Q648–S659 and S742–Q756. The span at A765–L774 shows a compositional bias: polar residues. The segment covering P808–Q820 has biased composition (low complexity). The span at Q821 to Q833 shows a compositional bias: pro residues.

Belongs to the protein kinase superfamily. CAMK Ser/Thr protein kinase family. SNF1 subfamily. In terms of assembly, interacts with and phosphorylates TORC2/CRTC2. Mg(2+) is required as a cofactor. Phosphorylated at Thr-175 by STK11/LKB1 in complex with STE20-related adapter-alpha (STRADA) pseudo kinase and CAB39. Phosphorylated at Thr-484 in response to insulin in adipocytes. In terms of processing, acetylation at Lys-53 inhibits kinase activity. Deacetylated by HDAC6.

It localises to the cytoplasm. The protein resides in the endoplasmic reticulum membrane. The enzyme catalyses L-seryl-[protein] + ATP = O-phospho-L-seryl-[protein] + ADP + H(+). It carries out the reaction L-threonyl-[protein] + ATP = O-phospho-L-threonyl-[protein] + ADP + H(+). Activated by phosphorylation on Thr-175. Functionally, serine/threonine-protein kinase that plays a role in many biological processes such as fatty acid oxidation, autophagy, immune response or glucose metabolism. Phosphorylates 'Ser-794' of IRS1 in insulin-stimulated adipocytes, potentially modulating the efficiency of insulin signal transduction. Inhibits CREB activity by phosphorylating and repressing TORCs, the CREB-specific coactivators. Phosphorylates EP300 and thus inhibits its histone acetyltransferase activity. In turn, regulates the DNA-binding ability of several transcription factors such as PPARA or MLXIPL. Also plays a role in thymic T-cell development. The protein is Serine/threonine-protein kinase SIK2 (SIK2) of Pongo abelii (Sumatran orangutan).